A 190-amino-acid chain; its full sequence is Crossover junction endodeoxyribonuclease RuvC (190 aa).

Residues Asp-8, Glu-67, and Asp-139 contribute to the active site. Mg(2+) is bound by residues Asp-8, Glu-67, and Asp-139.

It belongs to the RuvC family. In terms of assembly, homodimer which binds Holliday junction (HJ) DNA. The HJ becomes 2-fold symmetrical on binding to RuvC with unstacked arms; it has a different conformation from HJ DNA in complex with RuvA. In the full resolvosome a probable DNA-RuvA(4)-RuvB(12)-RuvC(2) complex forms which resolves the HJ. Requires Mg(2+) as cofactor.

The protein resides in the cytoplasm. It carries out the reaction Endonucleolytic cleavage at a junction such as a reciprocal single-stranded crossover between two homologous DNA duplexes (Holliday junction).. Its function is as follows. The RuvA-RuvB-RuvC complex processes Holliday junction (HJ) DNA during genetic recombination and DNA repair. Endonuclease that resolves HJ intermediates. Cleaves cruciform DNA by making single-stranded nicks across the HJ at symmetrical positions within the homologous arms, yielding a 5'-phosphate and a 3'-hydroxyl group; requires a central core of homology in the junction. The consensus cleavage sequence is 5'-(A/T)TT(C/G)-3'. Cleavage occurs on the 3'-side of the TT dinucleotide at the point of strand exchange. HJ branch migration catalyzed by RuvA-RuvB allows RuvC to scan DNA until it finds its consensus sequence, where it cleaves and resolves the cruciform DNA. The chain is Crossover junction endodeoxyribonuclease RuvC from Pasteurella multocida (strain Pm70).